The primary structure comprises 237 residues: Peptidase E (237 aa).

Active-site charge relay system residues include Ser-122, Asp-137, and His-159.

This sequence belongs to the peptidase S51 family.

The protein resides in the cytoplasm. The enzyme catalyses Dipeptidase E catalyzes the hydrolysis of dipeptides Asp-|-Xaa. It does not act on peptides with N-terminal Glu, Asn or Gln, nor does it cleave isoaspartyl peptides.. Its function is as follows. Hydrolyzes dipeptides containing N-terminal aspartate residues. May play a role in allowing the cell to use peptide aspartate to spare carbon otherwise required for the synthesis of the aspartate family of amino acids. This Shewanella baltica (strain OS185) protein is Peptidase E.